Here is a 240-residue protein sequence, read N- to C-terminus: Putative RING finger protein ORF96 (240 aa).

Residues 9-44 form an RING-type 1 zinc finger; that stretch reads CVVCMEEKPLVVFEPCMHHNCCESCSGHVSNCPYCR. The RING-type 2; degenerate zinc finger occupies 150–202; that stretch reads CVICKKEIKEEVGKTYMHACCTATICKPCAKAILKAMVEKEITENLPFCPYCF.

This is Putative RING finger protein ORF96 from Ostreid herpesvirus 1 (isolate France) (OsHV-1).